Consider the following 340-residue polypeptide: Anthranilate phosphoribosyltransferase (340 aa).

5-phospho-alpha-D-ribose 1-diphosphate is bound by residues Gly78, 81–82 (GD), Thr86, 88–91 (NIST), 106–114 (KHGNRSVSS), and Ser118. An anthranilate-binding site is contributed by Gly78. Ser90 is a binding site for Mg(2+). Asn109 provides a ligand contact to anthranilate. Anthranilate is bound at residue Arg164. Residues Asp223 and Glu224 each coordinate Mg(2+).

This sequence belongs to the anthranilate phosphoribosyltransferase family. In terms of assembly, homodimer. Requires Mg(2+) as cofactor.

It carries out the reaction N-(5-phospho-beta-D-ribosyl)anthranilate + diphosphate = 5-phospho-alpha-D-ribose 1-diphosphate + anthranilate. It participates in amino-acid biosynthesis; L-tryptophan biosynthesis; L-tryptophan from chorismate: step 2/5. Its function is as follows. Catalyzes the transfer of the phosphoribosyl group of 5-phosphorylribose-1-pyrophosphate (PRPP) to anthranilate to yield N-(5'-phosphoribosyl)-anthranilate (PRA). This chain is Anthranilate phosphoribosyltransferase, found in Bacillus pumilus (Bacillus mesentericus).